Here is a 308-residue protein sequence, read N- to C-terminus: Ornithine carbamoyltransferase (308 aa).

Residues 56–59 (STRT), Gln-83, Arg-107, and 134–137 (HPCQ) each bind carbamoyl phosphate. L-ornithine is bound by residues Asn-165, Asp-225, and 229 to 230 (SM). Carbamoyl phosphate contacts are provided by residues 266-267 (CL) and Arg-294.

The protein belongs to the aspartate/ornithine carbamoyltransferase superfamily. OTCase family.

It is found in the cytoplasm. The enzyme catalyses carbamoyl phosphate + L-ornithine = L-citrulline + phosphate + H(+). The protein operates within amino-acid biosynthesis; L-arginine biosynthesis; L-arginine from L-ornithine and carbamoyl phosphate: step 1/3. Its function is as follows. Reversibly catalyzes the transfer of the carbamoyl group from carbamoyl phosphate (CP) to the N(epsilon) atom of ornithine (ORN) to produce L-citrulline. The polypeptide is Ornithine carbamoyltransferase (Cereibacter sphaeroides (strain ATCC 17029 / ATH 2.4.9) (Rhodobacter sphaeroides)).